A 364-amino-acid chain; its full sequence is GTPase Obg (364 aa).

The Obg domain maps to 1-161; the sequence is MRFVDEVTIS…KYLRLELKIL (161 aa). The region spanning 162–334 is the OBG-type G domain; the sequence is ADAGIIGLPN…LVDAIWKLQS (173 aa). Residues 168–175, 193–197, 217–220, 287–290, and 315–317 contribute to the GTP site; these read GLPNAGKS, FTTLN, DIPG, NKID, and SAE. Positions 175 and 195 each coordinate Mg(2+).

This sequence belongs to the TRAFAC class OBG-HflX-like GTPase superfamily. OBG GTPase family. In terms of assembly, monomer. Mg(2+) serves as cofactor.

Its subcellular location is the cytoplasm. An essential GTPase which binds GTP, GDP and possibly (p)ppGpp with moderate affinity, with high nucleotide exchange rates and a fairly low GTP hydrolysis rate. Plays a role in control of the cell cycle, stress response, ribosome biogenesis and in those bacteria that undergo differentiation, in morphogenesis control. This chain is GTPase Obg, found in Lawsonia intracellularis (strain PHE/MN1-00).